Reading from the N-terminus, the 89-residue chain is Small ribosomal subunit protein uS15 (89 aa).

Belongs to the universal ribosomal protein uS15 family. As to quaternary structure, part of the 30S ribosomal subunit. Forms a bridge to the 50S subunit in the 70S ribosome, contacting the 23S rRNA.

Its function is as follows. One of the primary rRNA binding proteins, it binds directly to 16S rRNA where it helps nucleate assembly of the platform of the 30S subunit by binding and bridging several RNA helices of the 16S rRNA. In terms of biological role, forms an intersubunit bridge (bridge B4) with the 23S rRNA of the 50S subunit in the ribosome. The chain is Small ribosomal subunit protein uS15 from Bifidobacterium longum (strain DJO10A).